Consider the following 236-residue polypeptide: Phosphoribosylaminoimidazole-succinocarboxamide synthase (236 aa).

It belongs to the SAICAR synthetase family.

It catalyses the reaction 5-amino-1-(5-phospho-D-ribosyl)imidazole-4-carboxylate + L-aspartate + ATP = (2S)-2-[5-amino-1-(5-phospho-beta-D-ribosyl)imidazole-4-carboxamido]succinate + ADP + phosphate + 2 H(+). It participates in purine metabolism; IMP biosynthesis via de novo pathway; 5-amino-1-(5-phospho-D-ribosyl)imidazole-4-carboxamide from 5-amino-1-(5-phospho-D-ribosyl)imidazole-4-carboxylate: step 1/2. The protein is Phosphoribosylaminoimidazole-succinocarboxamide synthase of Rickettsia canadensis (strain McKiel).